A 421-amino-acid polypeptide reads, in one-letter code: MTLIRRVAFLSLHTSPMEQPGSGDAGGMNVYVRALASALAASGVEVEIFTRSTSSGQPAVEHPDPGVCVHNVISGPPRKLPKEELPELLHSMVAEIERIRQRQPHGRYDLIHSHYWVSGVAGLELSRLWGVPLVHTMHTMAKVKNLLLQSGEKPEPRRREDGELRIVDGATRLIANTPAEAAELVSHYNADFDHIDVAPPGVDLTVFTPAFRPRSRAQLGVPAGKFHLLFAGRIQRLKGPQVLVKAAALLRSRRPDIDLQVTILGALSGAKDFDLKSLISAAGMDDVVTHHPPVNAPELAGWFRSADVVVMPSYSESFGLVALEAQACGTPVVATRVGGLSRAIFDGRTGLLVDGHKAADWADVLEALYDDPATRGDMGRAAALHAQGFGWQRTAAITLESYHAAVDQYIDSHRIPVGHSP.

Residue H13 coordinates 1D-myo-inositol 3-phosphate. UDP-N-acetyl-alpha-D-glucosamine contacts are provided by residues 19 to 20 (QP) and G27. Residues 24–29 (DAGGMN), K82, Y115, T139, and R159 each bind 1D-myo-inositol 3-phosphate. R233, K238, and V294 together coordinate UDP-N-acetyl-alpha-D-glucosamine. 3 residues coordinate Mg(2+): F303, R304, and A306. E316 and E324 together coordinate UDP-N-acetyl-alpha-D-glucosamine. Residue T330 participates in Mg(2+) binding.

It belongs to the glycosyltransferase group 1 family. MshA subfamily. As to quaternary structure, homodimer.

The catalysed reaction is 1D-myo-inositol 3-phosphate + UDP-N-acetyl-alpha-D-glucosamine = 1D-myo-inositol 2-acetamido-2-deoxy-alpha-D-glucopyranoside 3-phosphate + UDP + H(+). Catalyzes the transfer of a N-acetyl-glucosamine moiety to 1D-myo-inositol 3-phosphate to produce 1D-myo-inositol 2-acetamido-2-deoxy-glucopyranoside 3-phosphate in the mycothiol biosynthesis pathway. The sequence is that of D-inositol 3-phosphate glycosyltransferase from Arthrobacter sp. (strain FB24).